A 152-amino-acid polypeptide reads, in one-letter code: Endoribonuclease YbeY (152 aa).

Residues His-101, His-105, and His-111 each contribute to the Zn(2+) site. Residues 132 to 152 (PSSLIERTTKPAKKAAKRKKR) form a disordered region. Positions 141-152 (KPAKKAAKRKKR) are enriched in basic residues.

The protein belongs to the endoribonuclease YbeY family. Zn(2+) is required as a cofactor.

It is found in the cytoplasm. Functionally, single strand-specific metallo-endoribonuclease involved in late-stage 70S ribosome quality control and in maturation of the 3' terminus of the 16S rRNA. In Koribacter versatilis (strain Ellin345), this protein is Endoribonuclease YbeY.